The primary structure comprises 347 residues: MKYSVGITALLATLAQGAAVMSKRDIPLDVKIQVVNNSEVKASITNSGSSSIKVVKTGSILDSADVEKSVIMAGENKVAFDGIRYQVATAGLPAEAFQIIEAGETIEVSFNVASTHDFAQGGDFDIAALGTFSVAESDSGDIFSAMAFESNHIKAHIDGTEAAKVRRSYLAKRTMVQSDCTGTRLTQTTNAINSCRSLAQRAASAAQSNSAKMNEYFKSTSSSAVNTVVTTFNRIASECNPSGGASRQYCTDQIGACSPGVIAYTVPSQSIMVNCPTFFTMPTTSNACRAQTQDNTILHEVTHLSQVKGTQDYNCYGYTCMRQLTSAQNLNHADTYTLFAQAIKVGC.

Positions 1 to 19 are cleaved as a signal peptide; it reads MKYSVGITALLATLAQGAA. Residues 20-176 constitute a propeptide that is removed on maturation; it reads VMSKRDIPLD…RSYLAKRTMV (157 aa). 2 disulfides stabilise this stretch: C180/C250 and C257/C275. H299 is a Zn(2+) binding site. Residue E300 is part of the active site. Residue H303 coordinates Zn(2+).

Belongs to the peptidase M35 family. Zn(2+) serves as cofactor.

It is found in the secreted. The catalysed reaction is Preferential cleavage of bonds with hydrophobic residues in P1'. Also 3-Asn-|-Gln-4 and 8-Gly-|-Ser-9 bonds in insulin B chain.. Secreted metalloproteinase that allows assimilation of proteinaceous substrates. Shows high activities on basic nuclear substrates such as histone and protamine. The chain is Neutral protease 2 homolog MGG_10927 from Pyricularia oryzae (strain 70-15 / ATCC MYA-4617 / FGSC 8958) (Rice blast fungus).